The sequence spans 181 residues: Oligoribonuclease (181 aa).

The region spanning 8–171 (LIWVDLEMTG…VDIQESIAEL (164 aa)) is the Exonuclease domain. The active site involves Tyr-129.

It belongs to the oligoribonuclease family.

Its subcellular location is the cytoplasm. 3'-to-5' exoribonuclease specific for small oligoribonucleotides. This chain is Oligoribonuclease, found in Shewanella loihica (strain ATCC BAA-1088 / PV-4).